Consider the following 84-residue polypeptide: Small ribosomal subunit protein uS17 (84 aa).

Belongs to the universal ribosomal protein uS17 family. In terms of assembly, part of the 30S ribosomal subunit.

Its function is as follows. One of the primary rRNA binding proteins, it binds specifically to the 5'-end of 16S ribosomal RNA. The sequence is that of Small ribosomal subunit protein uS17 from Histophilus somni (strain 129Pt) (Haemophilus somnus).